Consider the following 504-residue polypeptide: Glycerol kinase (504 aa).

Position 12 (Thr-12) interacts with ADP. Residues Thr-12, Thr-13, and Ser-14 each coordinate ATP. Position 12 (Thr-12) interacts with sn-glycerol 3-phosphate. Residue Arg-16 participates in ADP binding. Arg-82, Glu-83, Tyr-134, and Asp-246 together coordinate sn-glycerol 3-phosphate. The glycerol site is built by Arg-82, Glu-83, Tyr-134, Asp-246, and Gln-247. Thr-268 and Gly-312 together coordinate ADP. 4 residues coordinate ATP: Thr-268, Gly-312, Gln-316, and Gly-413. Gly-413 and Asn-417 together coordinate ADP.

The protein belongs to the FGGY kinase family.

The enzyme catalyses glycerol + ATP = sn-glycerol 3-phosphate + ADP + H(+). It functions in the pathway polyol metabolism; glycerol degradation via glycerol kinase pathway; sn-glycerol 3-phosphate from glycerol: step 1/1. With respect to regulation, inhibited by fructose 1,6-bisphosphate (FBP). In terms of biological role, key enzyme in the regulation of glycerol uptake and metabolism. Catalyzes the phosphorylation of glycerol to yield sn-glycerol 3-phosphate. The sequence is that of Glycerol kinase from Pseudarthrobacter chlorophenolicus (strain ATCC 700700 / DSM 12829 / CIP 107037 / JCM 12360 / KCTC 9906 / NCIMB 13794 / A6) (Arthrobacter chlorophenolicus).